Consider the following 106-residue polypeptide: Urease subunit beta (106 aa).

The protein belongs to the urease beta subunit family. In terms of assembly, heterotrimer of UreA (gamma), UreB (beta) and UreC (alpha) subunits. Three heterotrimers associate to form the active enzyme.

The protein resides in the cytoplasm. It carries out the reaction urea + 2 H2O + H(+) = hydrogencarbonate + 2 NH4(+). The protein operates within nitrogen metabolism; urea degradation; CO(2) and NH(3) from urea (urease route): step 1/1. The polypeptide is Urease subunit beta (Acinetobacter baumannii (strain ATCC 17978 / DSM 105126 / CIP 53.77 / LMG 1025 / NCDC KC755 / 5377)).